The sequence spans 1052 residues: Eukaryotic translation initiation factor 3 subunit A (1052 aa).

The PCI domain maps to 325-505; the sequence is IQYAASAVLL…GSLHFNNNIF (181 aa). 2 coiled-coil regions span residues 568–712 and 769–882; these read REHV…RLRE and EKTA…SAQT. 2 stretches are compositionally biased toward basic and acidic residues: residues 570-600 and 793-874; these read HVSN…EQMQ and KIRL…EQEK. 2 disordered regions span residues 570 to 606 and 793 to 1052; these read HVSN…HQNQ and KIRL…DDKN. Polar residues-rich tracts occupy residues 875-887 and 895-906; these read LSNL…QPTW and APTTAAPSSMRV. Composition is skewed to basic and acidic residues over residues 942-952, 960-970, 979-1013, and 1037-1052; these read DRGDRAPRDTG, RAPR…ERRA, and GSER…DDKN.

This sequence belongs to the eIF-3 subunit A family. In terms of assembly, component of the eukaryotic translation initiation factor 3 (eIF-3) complex.

The protein resides in the cytoplasm. Functionally, RNA-binding component of the eukaryotic translation initiation factor 3 (eIF-3) complex, which is involved in protein synthesis of a specialized repertoire of mRNAs and, together with other initiation factors, stimulates binding of mRNA and methionyl-tRNAi to the 40S ribosome. The eIF-3 complex specifically targets and initiates translation of a subset of mRNAs involved in cell proliferation. This chain is Eukaryotic translation initiation factor 3 subunit A, found in Monosiga brevicollis (Choanoflagellate).